Reading from the N-terminus, the 67-residue chain is DNA-directed RNA polymerase subunit omega (67 aa).

The protein belongs to the RNA polymerase subunit omega family. In terms of assembly, the RNAP catalytic core consists of 2 alpha, 1 beta, 1 beta' and 1 omega subunit. When a sigma factor is associated with the core the holoenzyme is formed, which can initiate transcription.

The catalysed reaction is RNA(n) + a ribonucleoside 5'-triphosphate = RNA(n+1) + diphosphate. Its function is as follows. Promotes RNA polymerase assembly. Latches the N- and C-terminal regions of the beta' subunit thereby facilitating its interaction with the beta and alpha subunits. The sequence is that of DNA-directed RNA polymerase subunit omega from Bordetella avium (strain 197N).